The chain runs to 458 residues: Sphingoid long chain base kinase 4 (458 aa).

Positions 103–241 (KRSRRFIVFI…FDLMTFEQKG (139 aa)) constitute a DAGKc domain. Residues 113–115 (NPH) and Thr-145 each bind ATP. 170–173 (GGDG) contributes to the substrate binding site. Asp-172 acts as the Proton donor/acceptor in catalysis. Residues Glu-177, 202–204 (GSG), Arg-266, Arg-272, and 426–428 (DGE) contribute to the ATP site.

It is found in the cell membrane. The protein localises to the endoplasmic reticulum membrane. The protein resides in the late endosome membrane. It localises to the golgi apparatus membrane. It catalyses the reaction a sphingoid base + ATP = a sphingoid 1-phosphate + ADP + H(+). In terms of biological role, catalyzes the phosphorylation of the sphingoid long chain bases dihydrosphingosine (DHS) and phytosphingosine (PHS) to form dihydrosphingosine 1-phosphate (DHS-1P) and phytosphingosine 1-phosphate (PHS-1P) respectively. Involved in the biosynthesis of sphingolipids and ceramides. Involved in heat-induced transient cell cycle arrest. Accumulation of phosphorylated sphingoid long chain bases (LCBPs) stimulates calcium influx and activates calcineurin signaling. Involved in heat-stress resistance. The chain is Sphingoid long chain base kinase 4 (lcb4) from Schizosaccharomyces pombe (strain 972 / ATCC 24843) (Fission yeast).